Reading from the N-terminus, the 210-residue chain is MQVKNPILGLCQKATFALSAAKVEQCPEDQGYEVAFAGRSNAGKSSALNTLTHASLARTSKTPGRTQLLNFFSLDDERRLVDLPGYGYAKVPIPLKQHWQKHLEAYLGSRECLRGVILMMDVRHPMTDFDKMMLDWARASGMPMHILLTKADKLTHGAGKNTLLKVQSEIRKGWGDSTTIQLFSAPKRLGLEEAYRVLADWMELEDKPVA.

An EngB-type G domain is found at 30–204 (QGYEVAFAGR…YRVLADWMEL (175 aa)). GTP is bound by residues 38 to 45 (GRSNAGKS), 64 to 68 (GRTQL), 82 to 85 (DLPG), 149 to 152 (TKAD), and 182 to 185 (LFSA). Residues S45 and T66 each contribute to the Mg(2+) site.

The protein belongs to the TRAFAC class TrmE-Era-EngA-EngB-Septin-like GTPase superfamily. EngB GTPase family. Mg(2+) serves as cofactor.

Functionally, necessary for normal cell division and for the maintenance of normal septation. The sequence is that of Probable GTP-binding protein EngB from Pseudomonas entomophila (strain L48).